A 785-amino-acid polypeptide reads, in one-letter code: Endonuclease MutS2 (785 aa).

ATP is bound at residue 335–342; sequence GPNTGGKT. Positions 710 to 785 constitute a Smr domain; sequence LDLRGERYED…GNGVTIVEFK (76 aa).

It belongs to the DNA mismatch repair MutS family. MutS2 subfamily. In terms of assembly, homodimer. Binds to stalled ribosomes, contacting rRNA.

Its function is as follows. Endonuclease that is involved in the suppression of homologous recombination and thus may have a key role in the control of bacterial genetic diversity. In terms of biological role, acts as a ribosome collision sensor, splitting the ribosome into its 2 subunits. Detects stalled/collided 70S ribosomes which it binds and splits by an ATP-hydrolysis driven conformational change. Acts upstream of the ribosome quality control system (RQC), a ribosome-associated complex that mediates the extraction of incompletely synthesized nascent chains from stalled ribosomes and their subsequent degradation. Probably generates substrates for RQC. In Listeria monocytogenes serotype 4b (strain F2365), this protein is Endonuclease MutS2.